The following is a 180-amino-acid chain: Succinate dehydrogenase cytochrome B subunit, mitochondrial (180 aa).

The Mitochondrial matrix portion of the chain corresponds to 1–82 (MFATRSFCLS…WYLSSLHRIT (82 aa)). Residues 83-103 (GCVVAGTLYAFAMGYLVAPLA) traverse the membrane as a helical segment. Residues 104 to 122 (GYSLDTATISGLIQQVPTW) lie on the Mitochondrial intermembrane side of the membrane. Residues 123 to 143 (IKVPAKFVISYPLTFHIFNGI) form a helical membrane-spanning segment. Residue His138 coordinates heme. The Mitochondrial matrix portion of the chain corresponds to 144 to 159 (RHLIWDTTKELSLKGV). The chain crosses the membrane as a helical span at residues 160–180 (YRTGYAVLALSVLTSGYFAMI).

This sequence belongs to the cytochrome b560 family. In terms of assembly, forms part of complex II containing four subunits: a 70 kDa flavoprotein (FP), a 27 kDa iron-sulfur protein (IP), a cytochrome B and a membrane-anchoring protein. Requires heme as cofactor.

The protein resides in the mitochondrion inner membrane. It participates in carbohydrate metabolism; tricarboxylic acid cycle. Its function is as follows. Membrane-anchoring subunit of succinate dehydrogenase (SDH) that is involved in complex II of the mitochondrial electron transport chain and is responsible for transferring electrons from succinate to ubiquinone (coenzyme Q). This chain is Succinate dehydrogenase cytochrome B subunit, mitochondrial (sdh3), found in Schizosaccharomyces pombe (strain 972 / ATCC 24843) (Fission yeast).